We begin with the raw amino-acid sequence, 326 residues long: Fos-related antigen 2 (326 aa).

The residue at position 1 (Met1) is an N-acetylmethionine. A disordered region spans residues 1–39; sequence MYQDYPGNFDTSSRGSSGSPAHAESYSSGGGGQQKFRVD. Polar residues predominate over residues 9 to 19; that stretch reads FDTSSRGSSGS. A Glycyl lysine isopeptide (Lys-Gly) (interchain with G-Cter in SUMO2) cross-link involves residue Lys35. At Lys104 the chain carries N6-acetyllysine; alternate. A Glycyl lysine isopeptide (Lys-Gly) (interchain with G-Cter in SUMO2); alternate cross-link involves residue Lys104. Disordered regions lie at residues 111 to 131, 193 to 244, and 289 to 326; these read GRRR…RIRR, ISPE…QRSV, and EQES…LLAL. Ser120 is subject to Phosphoserine. The bZIP domain occupies 124-187; the sequence is EEKRRIRRER…EKLEFMLVAH (64 aa). The basic motif stretch occupies residues 126 to 128; sequence KRR. The leucine-zipper stretch occupies residues 129–136; it reads IRRERNKL. At Ser200 the chain carries Phosphoserine. The span at 201–211 shows a compositional bias: polar residues; it reads PPTSGLQSLRG. Residue Lys222 forms a Glycyl lysine isopeptide (Lys-Gly) (interchain with G-Cter in SUMO2); alternate linkage. A Glycyl lysine isopeptide (Lys-Gly) (interchain with G-Cter in SUMO1); alternate cross-link involves residue Lys222. Residue Ser230 is modified to Phosphoserine. Residue Lys239 forms a Glycyl lysine isopeptide (Lys-Gly) (interchain with G-Cter in SUMO2) linkage. Phosphoserine occurs at positions 308 and 320. Low complexity predominate over residues 308–320; it reads SSSGDQSSDSLNS.

The protein belongs to the bZIP family. Fos subfamily. In terms of assembly, heterodimer. Interacts with the BAF multiprotein chromatin-remodeling complex subunits SMARCB1 and SMARCD1. Interacts with ARID1A and JUN. Expressed in the brain cortex. Expressed at night in pineal gland (at protein level). Also expressed in osteoblasts (at protein level).

The protein localises to the nucleus. Its function is as follows. Controls osteoclast survival and size. As a dimer with JUN, activates LIF transcription. Activates CEBPB transcription in PGE2-activated osteoblasts. This is Fos-related antigen 2 (Fosl2) from Rattus norvegicus (Rat).